Reading from the N-terminus, the 155-residue chain is Small ribosomal subunit protein uS13 (155 aa).

Over residues 135–145 the composition is skewed to basic residues; the sequence is QHTKTTGRRGR. Positions 135 to 155 are disordered; sequence QHTKTTGRRGRTVGVSRTKGA. A compositionally biased stretch (low complexity) spans 146–155; sequence TVGVSRTKGA.

The protein belongs to the universal ribosomal protein uS13 family. As to quaternary structure, component of the small ribosomal subunit.

The protein resides in the cytoplasm. Component of the small ribosomal subunit. The ribosome is a large ribonucleoprotein complex responsible for the synthesis of proteins in the cell. This is Small ribosomal subunit protein uS13 (RPS18) from Entamoeba histolytica (strain ATCC 30459 / HM-1:IMSS / ABRM).